An 869-amino-acid chain; its full sequence is 1-phosphatidylinositol 4,5-bisphosphate phosphodiesterase 1 (869 aa).

Residues 269 to 304 (VSTGQLLEFFQLADINHNGLLNYFEFEKFIKILKNR) form the EF-hand domain. Ca(2+)-binding residues include D282, N284, N286, and E293. The PI-PLC X-box domain maps to 382–520 (YSKPLNHYFI…LKHKILLKSK (139 aa)). Residues H395 and H439 contribute to the active site. K518 and K520 together coordinate substrate. Residues 546–571 (ANEQELRMKDDSTNSSSATNSSSMQR) are disordered. Over residues 558-568 (TNSSSATNSSS) the composition is skewed to low complexity. The PI-PLC Y-box domain occupies 590–709 (ISGIHGIKFR…SGYVLKPKKL (120 aa)). Positions 614 and 643 each coordinate substrate. The C2 domain maps to 713–862 (VTKAKMIPLI…EGEQYIFCTL (150 aa)).

In terms of assembly, interacts with SGD1. Ca(2+) serves as cofactor.

It catalyses the reaction a 1,2-diacyl-sn-glycero-3-phospho-(1D-myo-inositol-4,5-bisphosphate) + H2O = 1D-myo-inositol 1,4,5-trisphosphate + a 1,2-diacyl-sn-glycerol + H(+). In terms of biological role, the production of the second messenger molecules diacylglycerol (DAG) and inositol 1,4,5-trisphosphate (IP3) is mediated by activated phosphatidylinositol-specific phospholipase C enzymes. Required for cell growth, osmoresistance and expression of GPD1. The polypeptide is 1-phosphatidylinositol 4,5-bisphosphate phosphodiesterase 1 (PLC1) (Saccharomyces cerevisiae (strain ATCC 204508 / S288c) (Baker's yeast)).